Consider the following 518-residue polypeptide: Motile sperm domain-containing protein 2 (518 aa).

At 1–496 the chain is on the cytoplasmic side; that stretch reads MAENHAQNKA…QVQRCIWFQQ (496 aa). The CRAL-TRIO domain maps to 82-239; that stretch reads ESSIPRWLLE…HMGGTDPFKY (158 aa). Residues 252–308 form a disordered region; that stretch reads PLCENGPITSEDETSSKEDIESDGKETLETISNEEQTPLLKKINPTESTSKAEENEK. The segment covering 265 to 279 has biased composition (basic and acidic residues); it reads TSSKEDIESDGKETL. The MSP domain occupies 327–445; sequence LLHISPAEEL…MEHRLRCHTV (119 aa). The required for FFAT motif binding and phosphorylated FFAT motif binding stretch occupies residues 365–366; it reads RT. The chain crosses the membrane as a helical; Anchor for type IV membrane protein span at residues 497 to 518; it reads LLLSLTMLLLAFVTSFFYLLYS.

Homooligomer. Interacts (via MSP domain) with STARD3NL (via FFAT motif), RMDN3 (via FFAT motif), OSBPL1A (via FFAT motif) and CERT1 (via FFAT motif). Interacts (via MSP domain) with STARD3 (via phosphorylated FFAT motif); this interaction depends on the critical phosphorylation of STARD3 on 'Ser-209'. Interacts with RB1CC1 (via phosphorylated FFAT motif), MIGA2 (via phosphorylated FFAT motif) and OSBPL1A (via FFAT motif). As to expression, highly expressed in CD14(+) monocytes, and at lower levels in neutrophils. Does not show significant expression in B-cells or T-cells.

The protein localises to the endoplasmic reticulum membrane. Endoplasmic reticulum-anchored protein that mediates the formation of contact sites between the endoplasmic (ER) and endosomes, mitochondria or Golgi through interaction with conventional- and phosphorylated-FFAT-containing organelle-bound proteins. In addition, forms endoplasmic reticulum (ER)-lipid droplets (LDs) contacts through a direct protein-membrane interaction and participates in LDs homeostasis. The attachment mechanism involves an amphipathic helix that has an affinity for lipid packing defects present at the surface of LDs. Promotes migration of primary monocytes and neutrophils, in response to various chemokines. This is Motile sperm domain-containing protein 2 from Homo sapiens (Human).